The following is a 197-amino-acid chain: MVERKASVERNTLETQVKCSINLDGSGKARFDIGVPFLEHMLDQIARHGLIDLDIECKGDTHIDDHHTVEDVGITLGMAFAQAIGDKKGIFRYGHAYVPLDEALSRVVIDFSGRPGLQMHVPYTRASVGGFDVDLFQEFFQGFVNHALVTLHIDNLRGHNTHHQIETVFKAFGRALRMAITLDERMAGQMPSTKGCL.

Belongs to the imidazoleglycerol-phosphate dehydratase family.

It is found in the cytoplasm. It carries out the reaction D-erythro-1-(imidazol-4-yl)glycerol 3-phosphate = 3-(imidazol-4-yl)-2-oxopropyl phosphate + H2O. The protein operates within amino-acid biosynthesis; L-histidine biosynthesis; L-histidine from 5-phospho-alpha-D-ribose 1-diphosphate: step 6/9. The polypeptide is Imidazoleglycerol-phosphate dehydratase (Pseudomonas putida (strain ATCC 700007 / DSM 6899 / JCM 31910 / BCRC 17059 / LMG 24140 / F1)).